Reading from the N-terminus, the 580-residue chain is High affinity choline transporter 1 (580 aa).

The Extracellular portion of the chain corresponds to methionine 1–glutamate 6. A helical membrane pass occupies residues glycine 7 to tryptophan 27. The Cytoplasmic portion of the chain corresponds to lysine 28–aspartate 48. A helical membrane pass occupies residues isoleucine 49–asparagine 69. The Extracellular portion of the chain corresponds to glycine 70–glycine 81. The chain crosses the membrane as a helical span at residues leucine 82–phenylalanine 102. Residues alanine 103–arginine 125 are Cytoplasmic-facing. Residues methionine 126 to phenylalanine 146 traverse the membrane as a helical segment. The Extracellular segment spans residues serine 147 to serine 164. The helical transmembrane segment at valine 165 to alanine 185 threads the bilayer. Topologically, residues tyrosine 186–glutamine 191 are cytoplasmic. A helical membrane pass occupies residues leucine 192–valine 212. Over threonine 213–valine 237 the chain is Extracellular. A helical membrane pass occupies residues tyrosine 238–phenylalanine 258. Topologically, residues glutamine 259–serine 274 are cytoplasmic. A helical transmembrane segment spans residues phenylalanine 275–glycine 295. Over alanine 296–aspartate 317 the chain is Extracellular. N-linked (GlcNAc...) asparagine glycosylation is present at asparagine 301. A helical transmembrane segment spans residues methionine 318–glycine 338. Over alanine 339 to glutamate 376 the chain is Cytoplasmic. The chain crosses the membrane as a helical span at residues isoleucine 377–leucine 397. The Extracellular segment spans residues leucine 398–tryptophan 406. A helical membrane pass occupies residues tyrosine 407–isoleucine 427. At lysine 428–alanine 435 the chain is on the cytoplasmic side. The chain crosses the membrane as a helical span at residues valine 436 to leucine 456. Residues glutamine 457–threonine 481 lie on the Extracellular side of the membrane. Residues leucine 482–phenylalanine 502 form a helical membrane-spanning segment. A mediates interaction with SEC14L1 region spans residues phenylalanine 502–glutamine 580. The Cytoplasmic segment spans residues glutamate 503–glutamine 580. A Dileucine-like motif motif is present at residues aspartate 527 to valine 532.

The protein belongs to the sodium:solute symporter (SSF) (TC 2.A.21) family. In terms of assembly, homooligomerizes at cell surface. Interacts with SEC14L1; may regulate SLC5A7. Phosphorylated by PKC and dephosphorylated by PP1/PP2A. As to expression, found in spinal cord, brain-stem, mid-brain and striatum. Specific for cholinergic neurons.

It localises to the presynaptic cell membrane. The protein localises to the cell projection. The protein resides in the axon. It is found in the early endosome membrane. Its subcellular location is the cytoplasmic vesicle. It localises to the secretory vesicle. The protein localises to the synaptic vesicle membrane. The catalysed reaction is choline(out) + n Na(+)(out) = choline(in) + n Na(+)(in). With respect to regulation, choline uptake activity is regulated by SLC5A7/CHT1 internalization (inactive form) from the cell surface and recycling of internalized SLC5A7/CHT1 into the cell surface (active form). Activated by extracellular chloride ion. Specifically inhibited by nanomolar concentrations of hemicholinium 3. In terms of biological role, high-affinity Na(+)-coupled choline transmembrane symporter. Functions as an electrogenic, voltage-dependent transporter with variable charge/choline stoichiometry. Choline uptake and choline-induced current is also Cl(-)-dependent where Cl(-) is likely a regulatory ion rather than cotransported ion. Plays a critical role in acetylcholine (ACh) synthesis by taking up the substrate choline from the synaptic cleft into the presynaptic nerve terminals after neurotransmitter release. SLC5A7/CHT1-mediated choline high-affinity transport in cholinergic neurons is the rate-limiting step for production of ACh, thereby facilitating communication by subsequent action potentials. Localized predominantly in presynaptic terminal intracellular organelles, and translocated to the plasma membrane in active form in response to neuronal activity. This chain is High affinity choline transporter 1, found in Mus musculus (Mouse).